Here is a 357-residue protein sequence, read N- to C-terminus: MSLTRLLIRDFRNIETADLALSPGFNFLVGANGSGKTSMLEAIYTLGHGRAFRSLQIGRVIRHEQEAFVLHGRLQGEERETAIGLTKDKQGDSKVRIDGTDGHKVAELAHLMPMQLITPEGFTLLNGGPKYRRAFLDWGCFHNESGFFTAWSNLKRLLKQRNAALRQVTRYEQLRPWDKELILLAEQISTWRAEYSAGIAADMADTCKQFLPEFSLTFSFQRGWEKETEYAEVLERNFERDRQLTYTAHGPHKADLRIRADGAPVEDTLSRGQLKLLMCALRLAQGEFLTRESGRRCLYLIDDFASELDDERRGLLASRLKATQSQVFVSAISAEHVIDMSDENSKMFTVEKGKITD.

Gly-30–Thr-37 provides a ligand contact to ATP.

Belongs to the RecF family.

It localises to the cytoplasm. In terms of biological role, the RecF protein is involved in DNA metabolism; it is required for DNA replication and normal SOS inducibility. RecF binds preferentially to single-stranded, linear DNA. It also seems to bind ATP. This chain is DNA replication and repair protein RecF, found in Shigella dysenteriae serotype 1 (strain Sd197).